The primary structure comprises 215 residues: Cytochrome c biogenesis ATP-binding export protein CcmA (215 aa).

An ABC transporter domain is found at 3-211 (LTAENLAARR…KMTGFAGVDR (209 aa)). 35 to 42 (GRNGSGKS) serves as a coordination point for ATP.

This sequence belongs to the ABC transporter superfamily. CcmA exporter (TC 3.A.1.107) family. The complex is composed of two ATP-binding proteins (CcmA) and two transmembrane proteins (CcmB).

Its subcellular location is the cell inner membrane. The enzyme catalyses heme b(in) + ATP + H2O = heme b(out) + ADP + phosphate + H(+). Functionally, part of the ABC transporter complex CcmAB involved in the biogenesis of c-type cytochromes; once thought to export heme, this seems not to be the case, but its exact role is uncertain. Responsible for energy coupling to the transport system. This Rhizobium etli (strain ATCC 51251 / DSM 11541 / JCM 21823 / NBRC 15573 / CFN 42) protein is Cytochrome c biogenesis ATP-binding export protein CcmA.